A 246-amino-acid chain; its full sequence is Small ribosomal subunit protein uS2 (246 aa).

The disordered stretch occupies residues 226 to 246; that stretch reads QGEEEAEVAEETAPETETTTA. Acidic residues predominate over residues 229–239; the sequence is EEAEVAEETAP.

The protein belongs to the universal ribosomal protein uS2 family. As to quaternary structure, part of the 30S ribosomal subunit. Interacts with BrxC.

The chain is Small ribosomal subunit protein uS2 (rpsB) from Bacillus subtilis (strain 168).